The chain runs to 163 residues: Large ribosomal subunit protein mL59 (163 aa).

The segment at 33–53 (PAGADPETHKTPYQEESPNPF) is disordered.

Belongs to the mitochondrion-specific ribosomal protein mL59 family. Component of the mitochondrial large ribosomal subunit (mt-LSU). Mature N.crassa 74S mitochondrial ribosomes consist of a small (37S) and a large (54S) subunit. The 37S small subunit contains a 16S ribosomal RNA (16S mt-rRNA) and 32 different proteins. The 54S large subunit contains a 23S rRNA (23S mt-rRNA) and 42 different proteins.

The protein resides in the mitochondrion. Its function is as follows. Component of the mitochondrial ribosome (mitoribosome), a dedicated translation machinery responsible for the synthesis of mitochondrial genome-encoded proteins, including at least some of the essential transmembrane subunits of the mitochondrial respiratory chain. The mitoribosomes are attached to the mitochondrial inner membrane and translation products are cotranslationally integrated into the membrane. The chain is Large ribosomal subunit protein mL59 (mrpl25) from Neurospora crassa (strain ATCC 24698 / 74-OR23-1A / CBS 708.71 / DSM 1257 / FGSC 987).